An 85-amino-acid chain; its full sequence is Small ribosomal subunit protein uS17 (85 aa).

It belongs to the universal ribosomal protein uS17 family. As to quaternary structure, part of the 30S ribosomal subunit.

Its function is as follows. One of the primary rRNA binding proteins, it binds specifically to the 5'-end of 16S ribosomal RNA. In Ruminiclostridium cellulolyticum (strain ATCC 35319 / DSM 5812 / JCM 6584 / H10) (Clostridium cellulolyticum), this protein is Small ribosomal subunit protein uS17.